The following is a 469-amino-acid chain: ATP synthase subunit beta (469 aa).

ATP is bound at residue 153–160; it reads GGAGVGKT.

Belongs to the ATPase alpha/beta chains family. In terms of assembly, F-type ATPases have 2 components, CF(1) - the catalytic core - and CF(0) - the membrane proton channel. CF(1) has five subunits: alpha(3), beta(3), gamma(1), delta(1), epsilon(1). CF(0) has three main subunits: a(1), b(2) and c(9-12). The alpha and beta chains form an alternating ring which encloses part of the gamma chain. CF(1) is attached to CF(0) by a central stalk formed by the gamma and epsilon chains, while a peripheral stalk is formed by the delta and b chains.

The protein localises to the cell membrane. It carries out the reaction ATP + H2O + 4 H(+)(in) = ADP + phosphate + 5 H(+)(out). Its function is as follows. Produces ATP from ADP in the presence of a proton gradient across the membrane. The catalytic sites are hosted primarily by the beta subunits. This chain is ATP synthase subunit beta, found in Pediococcus pentosaceus (strain ATCC 25745 / CCUG 21536 / LMG 10740 / 183-1w).